Consider the following 560-residue polypeptide: DNA ligase B (560 aa).

Lys-124 functions as the N6-AMP-lysine intermediate in the catalytic mechanism.

This sequence belongs to the NAD-dependent DNA ligase family. LigB subfamily.

The catalysed reaction is NAD(+) + (deoxyribonucleotide)n-3'-hydroxyl + 5'-phospho-(deoxyribonucleotide)m = (deoxyribonucleotide)n+m + AMP + beta-nicotinamide D-nucleotide.. Catalyzes the formation of phosphodiester linkages between 5'-phosphoryl and 3'-hydroxyl groups in double-stranded DNA using NAD as a coenzyme and as the energy source for the reaction. The protein is DNA ligase B of Escherichia coli O6:K15:H31 (strain 536 / UPEC).